Reading from the N-terminus, the 306-residue chain is D-alanine--D-alanine ligase B (306 aa).

Active-site residues include Glu-15 and Ser-150. The 203-residue stretch at 101 to 303 folds into the ATP-grasp domain; sequence KLLWQGAGLP…FSQLVVRILE (203 aa). Position 134-189 (134-189) interacts with ATP; the sequence is ISALGLPVIVKPSREGSSVGMSKVVAENALQDALRLAFQHDEEVLIEKWLSGPEFT. Mg(2+) contacts are provided by Asp-257, Glu-270, and Asn-272. The active site involves Ser-281.

This sequence belongs to the D-alanine--D-alanine ligase family. As to quaternary structure, monomer. Mg(2+) serves as cofactor. Mn(2+) is required as a cofactor.

It localises to the cytoplasm. It carries out the reaction 2 D-alanine + ATP = D-alanyl-D-alanine + ADP + phosphate + H(+). It participates in cell wall biogenesis; peptidoglycan biosynthesis. Its function is as follows. Cell wall formation. The polypeptide is D-alanine--D-alanine ligase B (ddlB) (Escherichia coli O157:H7).